Consider the following 715-residue polypeptide: Scinderin (715 aa).

The segment at 1–363 (MAQGLYHEEF…DGFGKVYVTE (363 aa)) is actin-severing. One copy of the Gelsolin-like 1 repeat lies at 27 to 77 (LELVPVPESAYGNFYVGDAYLVLHTTQASRGFTYRLHFWLGKECTQDESTA). Residue Y102 is modified to Phosphotyrosine. Residues 112–119 (KGGLKYKA) and 138–146 (RLLHVKGRR) each bind a 1,2-diacyl-sn-glycero-3-phospho-(1D-myo-inositol-4,5-bisphosphate). Gelsolin-like repeat units follow at residues 148 to 188 (VRAT…YERL), 265 to 307 (LVAE…QERK), 398 to 451 (VQIW…DELT), and 523 to 564 (TRIM…EEEK). The interval 364 to 715 (KVAHVKQIPF…WFLGWDSSRW (352 aa)) is actin-binding, Ca-sensitive. The interval 364-715 (KVAHVKQIPF…WFLGWDSSRW (352 aa)) is ca(2+)-dependent actin binding. Residues N538, D539, and E562 each coordinate Ca(2+). Y599 is subject to Phosphotyrosine. Residues 626–668 (FIIEEVPGEFTQDDLAEDDVMLLDAWEQIFIWIGKDANEVEKS) form a Gelsolin-like 6 repeat. Ca(2+) contacts are provided by D643, D644, and E666.

The protein belongs to the villin/gelsolin family. In terms of processing, the N-terminus is blocked. As to expression, in the adrenal gland, expressed in the medulla but, in the cortex, found only in diffuse parts.

It localises to the cytoplasm. The protein resides in the cytoskeleton. Its subcellular location is the cell projection. It is found in the podosome. Functionally, ca(2+)-dependent actin filament-severing protein that has a regulatory function in exocytosis by affecting the organization of the microfilament network underneath the plasma membrane. In vitro, also has barbed end capping and nucleating activities in the presence of Ca(2+). Severing activity is inhibited by phosphatidylinositol 4,5-bis-phosphate (PIP2). Required for megakaryocyte differentiation, maturation, polyploidization and apoptosis with the release of platelet-like particles. Plays a role in osteoclastogenesis (OCG) and actin cytoskeletal organization in osteoclasts. Regulates chondrocyte proliferation and differentiation. Inhibits cell proliferation and tumorigenesis. Signaling is mediated by MAPK, p38 and JNK pathways. The sequence is that of Scinderin from Bos taurus (Bovine).